The following is a 140-amino-acid chain: Nucleoside diphosphate kinase (140 aa).

ATP contacts are provided by K9, F57, R85, T91, R102, and N112. H115 acts as the Pros-phosphohistidine intermediate in catalysis.

This sequence belongs to the NDK family. As to quaternary structure, homotetramer. Mg(2+) is required as a cofactor.

It localises to the cytoplasm. The catalysed reaction is a 2'-deoxyribonucleoside 5'-diphosphate + ATP = a 2'-deoxyribonucleoside 5'-triphosphate + ADP. The enzyme catalyses a ribonucleoside 5'-diphosphate + ATP = a ribonucleoside 5'-triphosphate + ADP. Major role in the synthesis of nucleoside triphosphates other than ATP. The ATP gamma phosphate is transferred to the NDP beta phosphate via a ping-pong mechanism, using a phosphorylated active-site intermediate. This Chlorobium luteolum (strain DSM 273 / BCRC 81028 / 2530) (Pelodictyon luteolum) protein is Nucleoside diphosphate kinase.